The chain runs to 275 residues: Lectin (275 aa).

A signal peptide spans methionine 1 to serine 30. D-glucose contacts are provided by aspartate 111 and glycine 129. The Mn(2+) site is built by glutamate 149 and aspartate 151. Ca(2+) is bound by residues aspartate 151, phenylalanine 153, asparagine 155, and aspartate 159. The Mn(2+) site is built by aspartate 159 and histidine 166. Residues asparagine 211 to asparagine 217 constitute a propeptide that is removed on maturation. Residues glycine 246 and alanine 247 each coordinate D-glucose. Residues lysine 270–alanine 275 constitute a propeptide that is removed on maturation.

Belongs to the leguminous lectin family. In terms of assembly, heterotetramer of two alpha and two beta chains. Post-translationally, the mature form consists of two chains, alpha and beta, produced by cleavage of the immature protein. These remain cleaved, yet fold together to form one subunit.

In terms of biological role, D-mannose specific lectin. This is Lectin from Lens culinaris subsp. tomentosus (Lentil).